Consider the following 64-residue polypeptide: Small ribosomal subunit protein bS21 (64 aa).

This sequence belongs to the bacterial ribosomal protein bS21 family.

The chain is Small ribosomal subunit protein bS21 from Neorickettsia sennetsu (strain ATCC VR-367 / Miyayama) (Ehrlichia sennetsu).